A 338-amino-acid polypeptide reads, in one-letter code: Lipoate-protein ligase A (338 aa).

Positions 29–216 (PATQRVLFLW…AFFAHYGERV (188 aa)) constitute a BPL/LPL catalytic domain. Residues R71, 76–79 (GAVF), and K134 each bind ATP. Residue K134 coordinates (R)-lipoate.

It belongs to the LplA family. As to quaternary structure, monomer.

It is found in the cytoplasm. The catalysed reaction is L-lysyl-[lipoyl-carrier protein] + (R)-lipoate + ATP = N(6)-[(R)-lipoyl]-L-lysyl-[lipoyl-carrier protein] + AMP + diphosphate + H(+). Its pathway is protein modification; protein lipoylation via exogenous pathway; protein N(6)-(lipoyl)lysine from lipoate: step 1/2. It functions in the pathway protein modification; protein lipoylation via exogenous pathway; protein N(6)-(lipoyl)lysine from lipoate: step 2/2. Catalyzes both the ATP-dependent activation of exogenously supplied lipoate to lipoyl-AMP and the transfer of the activated lipoyl onto the lipoyl domains of lipoate-dependent enzymes. The chain is Lipoate-protein ligase A from Shigella sonnei (strain Ss046).